The chain runs to 392 residues: MKELLANRVKTLTPSTTLAITAKAKEMKAQGIDVIGLGAGEPDFNTPQNIMDAAIDSMQQGYTKYTPSGGLPALKQAIIEKFKRDNQLEYKPNEIIVGVGAKHVLYTLFQVILNEGDEVIIPIPYWVSYPEQVKLAGGVPVYIEATSEQNYKITAEQLKNAITDKTKAVIINSPSNPTGMVYTREELEDIAKIALENNILIVSDEIYEKLLYNGAEHFSIAQISEEVKAQTIVINGVSKSHSMTGWRIGYAAGNADIINAMTDLASHSTSNPTTASQYAAIEAYNGPQDSVEEMRKAFESRLETIYPKLSAIPGFKVVKPQGAFYLLPDVSEAAQKTGFASVDEFASALLTEANVAVIPGSGFGAPSTIRISYATSLNLIEEAIERIDRFVK.

L-aspartate is bound by residues glycine 40, tryptophan 126, and asparagine 176. The residue at position 239 (lysine 239) is an N6-(pyridoxal phosphate)lysine.

Belongs to the class-I pyridoxal-phosphate-dependent aminotransferase family. In terms of assembly, homodimer. Pyridoxal 5'-phosphate serves as cofactor.

It is found in the cytoplasm. It catalyses the reaction L-aspartate + 2-oxoglutarate = oxaloacetate + L-glutamate. This chain is Aspartate aminotransferase, found in Bacillus sp. (strain YM-2).